Reading from the N-terminus, the 394-residue chain is MSKEKFERTKPHVNVGTIGHVDHGKTTLTAAICTVLAKVYGGKARDFASIDNAPEERERGITINTSHVEYDTPNRHYAHVDCPGHADYVKNMITGAAQMDGGILVVAATDGPMPQTREHILLGRQVGIPYIIVFMNKCDMVDDEELLELVEMEVRELLSEYDFPGDDLPVIQGSALGALNGEAQWEAKIVELAEALDTYIPEPERAVDMAFLMPIEDVFSIQGRGTVVTGRIERGILKVGDEVAIVGIKETVKTTCTGVEMFRKLLDEGRAGENVGALLRGTKREEVERGQVLAKPGSITPHTKFESEVYVLSKDEGGRHTPFFKGYRPQFYFRTTDVTGSIELPEGVEMVMPGDNVKMVVDLIAPIAMDEGLRFAIREGGRTVGAGVVAKIIA.

The region spanning 10–204 (KPHVNVGTIG…ALDTYIPEPE (195 aa)) is the tr-type G domain. The G1 stretch occupies residues 19-26 (GHVDHGKT). Residue 19–26 (GHVDHGKT) coordinates GTP. Position 26 (threonine 26) interacts with Mg(2+). The G2 stretch occupies residues 60–64 (GITIN). Residues 81–84 (DCPG) form a G3 region. GTP contacts are provided by residues 81–85 (DCPGH) and 136–139 (NKCD). Positions 136 to 139 (NKCD) are G4. The interval 174–176 (SAL) is G5.

This sequence belongs to the TRAFAC class translation factor GTPase superfamily. Classic translation factor GTPase family. EF-Tu/EF-1A subfamily. As to quaternary structure, monomer.

The protein resides in the cytoplasm. It catalyses the reaction GTP + H2O = GDP + phosphate + H(+). Its function is as follows. GTP hydrolase that promotes the GTP-dependent binding of aminoacyl-tRNA to the A-site of ribosomes during protein biosynthesis. The protein is Elongation factor Tu of Vibrio cholerae serotype O1 (strain ATCC 39541 / Classical Ogawa 395 / O395).